Here is a 617-residue protein sequence, read N- to C-terminus: LEAF RUST 10 DISEASE-RESISTANCE LOCUS RECEPTOR-LIKE PROTEIN KINASE-like 2.4 (617 aa).

The N-terminal stretch at 1 to 26 (MYYLPSSCLVLFLFFSLFYHLPCASS) is a signal peptide. The Extracellular portion of the chain corresponds to 27–243 (KQTLGWCESQ…LPTRLSSEAK (217 aa)). N-linked (GlcNAc...) asparagine glycosylation is found at asparagine 41, asparagine 69, asparagine 86, asparagine 112, and asparagine 184. A helical membrane pass occupies residues 244–264 (IATIAGVSLLPFLVLTLVVHI). The Cytoplasmic segment spans residues 265–617 (IRKQKTSNDK…SEENSISSEI (353 aa)). Residues 307 to 594 (NSFAEVVGRG…ALEVPPRPVL (288 aa)) form the Protein kinase domain. Residues 313 to 321 (VGRGGFGIV) and lysine 335 contribute to the ATP site. Tyrosine 380 bears the Phosphotyrosine mark. Residue aspartate 431 is the Proton acceptor of the active site. 2 positions are modified to phosphothreonine: threonine 468 and threonine 471.

It belongs to the protein kinase superfamily. Ser/Thr protein kinase family.

It is found in the membrane. The enzyme catalyses L-seryl-[protein] + ATP = O-phospho-L-seryl-[protein] + ADP + H(+). It carries out the reaction L-threonyl-[protein] + ATP = O-phospho-L-threonyl-[protein] + ADP + H(+). The chain is LEAF RUST 10 DISEASE-RESISTANCE LOCUS RECEPTOR-LIKE PROTEIN KINASE-like 2.4 from Arabidopsis thaliana (Mouse-ear cress).